The sequence spans 1465 residues: MSDLFAKLMDQIEMPLDMRRSSAFSSADIIEVKVHSVSRLWEFHFAFAAVLPIATYRELHDRLIRTFEAADIKVTFDIQAAQVDYSDDLLQAYYQEAFEHAPCNSASFKSSFSKLKVTYEDDKLIIAAPRFVNNDHFRNNHLPNLVKQFEAFGFGTLTIDMVSDQEMTEHLTKDFVSSRQALVKKAVQDNLEAQKSLEAMMPPVEEATPAPKFDYKERAAKRQAGFEKATITPMIEIETEENRIVFEGMVFDVERKTTRTGRHIINFKMTDYTSSFALQKWAKDDEELRKFDMIAKGAWLRVQGNIETNPFTKSLTMNVQQVKEIVHHDRKDLMPEGQKRVELHAHTNMSTMDALPTVESLIDTAAKWGHKAVAITDHANVQSFPHGYHRARKAGIKAIFGLEANIVEDKVPISYDPVDMDLHEATYVVFDVETTGLSAMNNDLIQIAASKMFKGNIVEQFDEFIDPGHPLSAFTTELTGITDKHLQGAKPLVTVLKAFQDFCKDSILVAHNASFDVGFMNANYERHNLPKITQPVIDTLEFARNLYPEYKRHGLGPLTKRFQVSLDHHHMANYDAEATGRLLFIFLRDAREKHGIKNLLQLNTDLVAEDSYKKARIKHATIYVQNQVGLKNMFKLVSLSNIKYFEGVPRIPRTVLDAHREGLLLGTACSDGEVFDAVLTKGIDAAVDLAKYYDFIEIMPPAIYQPLVVRELIKDQAGIEQVIRDLIEVGKRAKKPVLATGNVHYLEPEEEIYREIIVRSLGQGAMINRTIGRGEGAQPAPLPKAHFRTTNEMLDEFAFLGKDLAYQVVVQNTQDFADRIEEVEVVKGDLYTPYIDKAEETVAELTYQKAFEIYGNPLPDIIDLRIEKELTSILGNGFAVIYLASQMLVNRSNERGYLVGSRGSVGSSFVATMIGITEVNPMPPHYVCPSCQHSEFITDGSVGSGYDLPNKPCPKCGTPYQKDGQDIPFETFLGFDGDKVPDIDLNFSGDDQPSAHLDVRDIFGDEYAFRAGTVGTVAEKTAYGFVKGYERDYGKFYRDAEVDRLAAGAAGVKRTTGQHPGGIVVIPNYMDVYDFTPVQYPADDVTASWQTTHFNFHDIDENVLKLDILGHDDPTMIRKLQDLSGIDPITIPADDPGVMALFSGTEILGVTPEQIGTPTGMLGIPEFGTNFVRGMVNETHPTTFAELLQLSGLSHGTDVWLGNAQDLIKEGIATLKTVIGCRDDIMVYLMHAGLEPKMAFTIMERVRKGLWLKISEEERNGYIDAMRENNVPDWYIESCGKIKYMFPKAHAAAYVLMALRVAYFKVHHPIMYYCAYFSIRAKAFELKTMSGGLDAVKARMEDITIKRKNNEATNVENDLFTTLEIVNEMLERGFKFGKLDLYKSDAIEFQIKGDTLIPPFIALEGLGENVAKQIVKARQEGEFLSKMELRKRGGASSTLVEKMDEMGILGNMPEDNQLSLFDDFF.

The region spanning 427 to 583 is the Exonuclease domain; it reads YVVFDVETTG…YDAEATGRLL (157 aa).

Belongs to the DNA polymerase type-C family. PolC subfamily.

It is found in the cytoplasm. The enzyme catalyses DNA(n) + a 2'-deoxyribonucleoside 5'-triphosphate = DNA(n+1) + diphosphate. In terms of biological role, required for replicative DNA synthesis. This DNA polymerase also exhibits 3' to 5' exonuclease activity. This is DNA polymerase III PolC-type from Streptococcus pyogenes serotype M18 (strain MGAS8232).